Consider the following 513-residue polypeptide: ATP synthase subunit alpha (513 aa).

169-176 contacts ATP; sequence GDRQTGKT.

It belongs to the ATPase alpha/beta chains family. In terms of assembly, F-type ATPases have 2 components, CF(1) - the catalytic core - and CF(0) - the membrane proton channel. CF(1) has five subunits: alpha(3), beta(3), gamma(1), delta(1), epsilon(1). CF(0) has three main subunits: a(1), b(2) and c(9-12). The alpha and beta chains form an alternating ring which encloses part of the gamma chain. CF(1) is attached to CF(0) by a central stalk formed by the gamma and epsilon chains, while a peripheral stalk is formed by the delta and b chains.

It is found in the cell inner membrane. The catalysed reaction is ATP + H2O + 4 H(+)(in) = ADP + phosphate + 5 H(+)(out). Functionally, produces ATP from ADP in the presence of a proton gradient across the membrane. The alpha chain is a regulatory subunit. In Pseudoalteromonas translucida (strain TAC 125), this protein is ATP synthase subunit alpha.